The chain runs to 131 residues: Small ribosomal subunit protein uS12 (131 aa).

Residue Asp89 is modified to 3-methylthioaspartic acid. Positions 106-131 are disordered; the sequence is GVDGRKQGRSKYGAKKAKVAKTASAK. Over residues 112–124 the composition is skewed to basic residues; it reads QGRSKYGAKKAKV.

Belongs to the universal ribosomal protein uS12 family. Part of the 30S ribosomal subunit. Contacts proteins S8 and S17. May interact with IF1 in the 30S initiation complex.

In terms of biological role, with S4 and S5 plays an important role in translational accuracy. Its function is as follows. Interacts with and stabilizes bases of the 16S rRNA that are involved in tRNA selection in the A site and with the mRNA backbone. Located at the interface of the 30S and 50S subunits, it traverses the body of the 30S subunit contacting proteins on the other side and probably holding the rRNA structure together. The combined cluster of proteins S8, S12 and S17 appears to hold together the shoulder and platform of the 30S subunit. The chain is Small ribosomal subunit protein uS12 from Endomicrobium trichonymphae.